The chain runs to 278 residues: Beta-lactamase-like protein str5 (278 aa).

The helical transmembrane segment at 20 to 37 threads the bilayer; sequence VFVLAALLSATFAFFTHT. Asn-112 is a glycosylation site (N-linked (GlcNAc...) asparagine).

This sequence belongs to the beta-lactamase family.

It localises to the membrane. It functions in the pathway mycotoxin biosynthesis. Beta-lactamase-like protein; part of the gene cluster that mediates the biosynthesis of strobilurin A, an antifungal polyketide that contains a key beta-methoxyacrylate toxophore that targets the complex III of the mitochondrial electron transport chain. Strobilurin biosynthesis begins with construction of benzoyl CoA by step-wise elimination of ammonia from phenylalanine by the phenylalanine ammonia-lyase str11, oxygenation by str8 and retro-Claisen reaction to form benzoic acid, which is activated to its CoA thiolester benzoyl CoA by the dedicated CoA ligase str10. Benzoyl CoA forms the starter unit for the highly reducing polyketide synthase stpks1 that produces the polyketide prestrobilutin A. The FAD-dependent oxygenase str9 then catalyzes the key oxidative rearrangement responsible for the creation of the beta-methoxyacrylate toxophore. Str9 performs epoxidation of the 2,3 olefin of prestrobilutin A, followed by Meinwald rearrangement to furnish the aldehyde intermediate. Rapid enolization of the aldehyde intermediate would give the beta-methoxyacrylate skeleton and methylations catalyzed by str2 and str3 complete the synthesis and lead to the production of strobilurin A. The short-chain dehydrogenase stl2 and the dehydrogenase str4 play a role in the shunt pathway leading to the production of bolineol. The cluster encodes no obvious halogenase gene that could be involved in production of strobilurin B, nor any obvious dimethylallyl-transferase that could be involved in the production of strobilurin G. It is possible that unknown proteins encoded in, or near, the cluster (such as str1 or stl1) may form new classes of halogenases or dimethylally-transferases, or that the responsible genes are located elsewhere on the genome. Similarly, proteins encoded by str5/str6 hydrolases appear to have no chemical role in the biosynthesis of strobilurin A. Finally, no obvious self-resistance gene is found within the cluster. This is Beta-lactamase-like protein str5 from Strobilurus tenacellus.